Here is a 287-residue protein sequence, read N- to C-terminus: 4-hydroxybenzoate octaprenyltransferase (287 aa).

Helical transmembrane passes span 22–42 (IGTL…AQGF), 45–65 (LGVL…GCVI), 91–111 (TSTE…LLVL), 114–134 (NSLT…YPFM), 139–159 (QLPQ…AFAA), 161–181 (ANAL…WTIA), 212–232 (IIIA…GWLE), 236–256 (WIYF…QLQI), and 267–287 (AFLD…LGYL).

The protein belongs to the UbiA prenyltransferase family. Mg(2+) is required as a cofactor.

The protein localises to the cell inner membrane. It catalyses the reaction all-trans-octaprenyl diphosphate + 4-hydroxybenzoate = 4-hydroxy-3-(all-trans-octaprenyl)benzoate + diphosphate. It functions in the pathway cofactor biosynthesis; ubiquinone biosynthesis. Catalyzes the prenylation of para-hydroxybenzoate (PHB) with an all-trans polyprenyl group. Mediates the second step in the final reaction sequence of ubiquinone-8 (UQ-8) biosynthesis, which is the condensation of the polyisoprenoid side chain with PHB, generating the first membrane-bound Q intermediate 3-octaprenyl-4-hydroxybenzoate. The polypeptide is 4-hydroxybenzoate octaprenyltransferase (Psychromonas ingrahamii (strain DSM 17664 / CCUG 51855 / 37)).